A 115-amino-acid polypeptide reads, in one-letter code: Large ribosomal subunit protein bL19 (115 aa).

Belongs to the bacterial ribosomal protein bL19 family.

Its function is as follows. This protein is located at the 30S-50S ribosomal subunit interface and may play a role in the structure and function of the aminoacyl-tRNA binding site. The polypeptide is Large ribosomal subunit protein bL19 (Caldanaerobacter subterraneus subsp. tengcongensis (strain DSM 15242 / JCM 11007 / NBRC 100824 / MB4) (Thermoanaerobacter tengcongensis)).